Here is a 258-residue protein sequence, read N- to C-terminus: Deoxyribose-phosphate aldolase (258 aa).

The Proton donor/acceptor role is filled by aspartate 102. The Schiff-base intermediate with acetaldehyde role is filled by lysine 165. The active-site Proton donor/acceptor is lysine 199.

Belongs to the DeoC/FbaB aldolase family. DeoC type 2 subfamily.

It localises to the cytoplasm. It carries out the reaction 2-deoxy-D-ribose 5-phosphate = D-glyceraldehyde 3-phosphate + acetaldehyde. Its pathway is carbohydrate degradation; 2-deoxy-D-ribose 1-phosphate degradation; D-glyceraldehyde 3-phosphate and acetaldehyde from 2-deoxy-alpha-D-ribose 1-phosphate: step 2/2. Catalyzes a reversible aldol reaction between acetaldehyde and D-glyceraldehyde 3-phosphate to generate 2-deoxy-D-ribose 5-phosphate. This is Deoxyribose-phosphate aldolase from Vibrio parahaemolyticus serotype O3:K6 (strain RIMD 2210633).